An 819-amino-acid chain; its full sequence is Leucine--tRNA ligase (819 aa).

Positions 41 to 51 (PYPSGTLHVGH) match the 'HIGH' region motif. A 'KMSKS' region motif is present at residues 578–582 (KMSKS). K581 provides a ligand contact to ATP.

Belongs to the class-I aminoacyl-tRNA synthetase family.

The protein resides in the cytoplasm. It carries out the reaction tRNA(Leu) + L-leucine + ATP = L-leucyl-tRNA(Leu) + AMP + diphosphate. This is Leucine--tRNA ligase from Fervidobacterium nodosum (strain ATCC 35602 / DSM 5306 / Rt17-B1).